Reading from the N-terminus, the 83-residue chain is MSELIQQIVQVLKEQVVQDTVVPRNIRRAAEQAIEVLLDESRDPAVRAADAIAILEEISEDPNMPMHTRTIIWEVLGALEQVK.

This sequence belongs to the UPF0147 family.

This chain is UPF0147 protein TK2131, found in Thermococcus kodakarensis (strain ATCC BAA-918 / JCM 12380 / KOD1) (Pyrococcus kodakaraensis (strain KOD1)).